The chain runs to 824 residues: Acyl-homoserine lactone acylase QuiP (824 aa).

A signal peptide spans 1–26 (MASPALRHFLPRFGAAAAAASFLSLA). The active-site Nucleophile is the Ser-264.

Belongs to the peptidase S45 family. As to quaternary structure, heterodimer of an alpha subunit and a beta subunit processed from the same precursor.

Its subcellular location is the periplasm. The catalysed reaction is an N-acyl-L-homoserine lactone + H2O = L-homoserine lactone + a carboxylate. In terms of biological role, catalyzes the deacylation of acyl-homoserine lactone (AHL or acyl-HSL), releasing homoserine lactone (HSL) and the corresponding fatty acid. Possesses a specificity for the degradation of long-chain acyl-HSLs (side chains of seven or more carbons in length). The protein is Acyl-homoserine lactone acylase QuiP (quiP) of Pseudomonas syringae pv. syringae (strain B728a).